Here is a 497-residue protein sequence, read N- to C-terminus: Aldehyde dehydrogenase (497 aa).

241 to 246 (GSTLVG) lines the NAD(+) pocket. Catalysis depends on E264, which acts as the Proton acceptor. The active-site Nucleophile is the C298.

The protein belongs to the aldehyde dehydrogenase family.

It carries out the reaction an aldehyde + NAD(+) + H2O = a carboxylate + NADH + 2 H(+). The protein operates within alcohol metabolism; ethanol degradation; acetate from ethanol: step 2/2. In Emericella nidulans (strain FGSC A4 / ATCC 38163 / CBS 112.46 / NRRL 194 / M139) (Aspergillus nidulans), this protein is Aldehyde dehydrogenase (aldA).